Here is an 813-residue protein sequence, read N- to C-terminus: Leucine--tRNA ligase (813 aa).

The 'HIGH' region signature appears at 42–52; the sequence is PYTSGNLHIGH. Residues 580–584 carry the 'KMSKS' region motif; it reads KMSKS. K583 provides a ligand contact to ATP.

This sequence belongs to the class-I aminoacyl-tRNA synthetase family.

It is found in the cytoplasm. It catalyses the reaction tRNA(Leu) + L-leucine + ATP = L-leucyl-tRNA(Leu) + AMP + diphosphate. This Dehalococcoides mccartyi (strain CBDB1) protein is Leucine--tRNA ligase.